A 132-amino-acid polypeptide reads, in one-letter code: Small ribosomal subunit protein uS8 (132 aa).

It belongs to the universal ribosomal protein uS8 family. In terms of assembly, part of the 30S ribosomal subunit. Contacts proteins S5 and S12.

Functionally, one of the primary rRNA binding proteins, it binds directly to 16S rRNA central domain where it helps coordinate assembly of the platform of the 30S subunit. In Leifsonia xyli subsp. xyli (strain CTCB07), this protein is Small ribosomal subunit protein uS8.